A 543-amino-acid chain; its full sequence is Probable ubiquitin-conjugating enzyme E2 26 (543 aa).

Residues 1 to 21 are disordered; that stretch reads MEPDVVEIPPPPLIASGSRTR. The region spanning 271-431 is the UBC core domain; that stretch reads NWVKKVQADW…VFLLSLKTMV (161 aa). The active-site Glycyl thioester intermediate is Cys357. Residues 514-543 form a disordered region; it reads LAEKPEPPMSNANTENQSKKKTRKRSRSSR. Positions 532–543 are enriched in basic residues; that stretch reads KKKTRKRSRSSR.

This sequence belongs to the ubiquitin-conjugating enzyme family.

It catalyses the reaction S-ubiquitinyl-[E1 ubiquitin-activating enzyme]-L-cysteine + [E2 ubiquitin-conjugating enzyme]-L-cysteine = [E1 ubiquitin-activating enzyme]-L-cysteine + S-ubiquitinyl-[E2 ubiquitin-conjugating enzyme]-L-cysteine.. The protein operates within protein modification; protein ubiquitination. Functionally, accepts the ubiquitin from the E1 complex and catalyzes its covalent attachment to other proteins. This is Probable ubiquitin-conjugating enzyme E2 26 (UBC26) from Arabidopsis thaliana (Mouse-ear cress).